Reading from the N-terminus, the 158-residue chain is Transcription elongation factor GreA (158 aa).

The protein belongs to the GreA/GreB family.

In terms of biological role, necessary for efficient RNA polymerase transcription elongation past template-encoded arresting sites. The arresting sites in DNA have the property of trapping a certain fraction of elongating RNA polymerases that pass through, resulting in locked ternary complexes. Cleavage of the nascent transcript by cleavage factors such as GreA or GreB allows the resumption of elongation from the new 3'terminus. GreA releases sequences of 2 to 3 nucleotides. The protein is Transcription elongation factor GreA of Hamiltonella defensa subsp. Acyrthosiphon pisum (strain 5AT).